The sequence spans 153 residues: Putative ATP synthase subunit f, mitochondrial (153 aa).

It belongs to the ATPase F chain family. In terms of assembly, subunit of the F-type ATPase which has 2 components, CF(1) - the catalytic core - and CF(0) - the membrane proton channel.

It localises to the mitochondrion membrane. Its function is as follows. Mitochondrial membrane ATP synthase (F(1)F(0) ATP synthase or Complex V) produces ATP from ADP in the presence of a proton gradient across the membrane which is generated by electron transport complexes of the respiratory chain. F-type ATPases consist of two structural domains, F(1) - containing the extramembraneous catalytic core and F(0) - containing the membrane proton channel, linked together by a central stalk and a peripheral stalk. During catalysis, ATP synthesis in the catalytic domain of F(1) is coupled via a rotary mechanism of the central stalk subunits to proton translocation. Part of the complex F(0) domain. Minor subunit located with subunit a in the membrane. The protein is Putative ATP synthase subunit f, mitochondrial of Caenorhabditis elegans.